The chain runs to 226 residues: Cytidylate kinase (226 aa).

10-18 (GPASSGKST) lines the ATP pocket.

The protein belongs to the cytidylate kinase family. Type 1 subfamily.

The protein resides in the cytoplasm. The enzyme catalyses CMP + ATP = CDP + ADP. The catalysed reaction is dCMP + ATP = dCDP + ADP. This chain is Cytidylate kinase, found in Streptococcus equi subsp. equi (strain 4047).